We begin with the raw amino-acid sequence, 259 residues long: Thiazole synthase (259 aa).

Lys95 acts as the Schiff-base intermediate with DXP in catalysis. 1-deoxy-D-xylulose 5-phosphate contacts are provided by residues Gly156, 183–184 (AG), and 205–206 (NS).

It belongs to the ThiG family. In terms of assembly, homotetramer. Forms heterodimers with either ThiH or ThiS.

It localises to the cytoplasm. It carries out the reaction [ThiS sulfur-carrier protein]-C-terminal-Gly-aminoethanethioate + 2-iminoacetate + 1-deoxy-D-xylulose 5-phosphate = [ThiS sulfur-carrier protein]-C-terminal Gly-Gly + 2-[(2R,5Z)-2-carboxy-4-methylthiazol-5(2H)-ylidene]ethyl phosphate + 2 H2O + H(+). It functions in the pathway cofactor biosynthesis; thiamine diphosphate biosynthesis. Its function is as follows. Catalyzes the rearrangement of 1-deoxy-D-xylulose 5-phosphate (DXP) to produce the thiazole phosphate moiety of thiamine. Sulfur is provided by the thiocarboxylate moiety of the carrier protein ThiS. In vitro, sulfur can be provided by H(2)S. In Coxiella burnetii (strain RSA 331 / Henzerling II), this protein is Thiazole synthase.